We begin with the raw amino-acid sequence, 255 residues long: Ribonuclease HII (255 aa).

The RNase H type-2 domain occupies 70–255 (DLVAGIDEVG…FEPVPEFLIK (186 aa)). A divalent metal cation-binding residues include Asp76, Glu77, and Asp168.

Belongs to the RNase HII family. Mn(2+) is required as a cofactor. The cofactor is Mg(2+).

It is found in the cytoplasm. The catalysed reaction is Endonucleolytic cleavage to 5'-phosphomonoester.. Functionally, endonuclease that specifically degrades the RNA of RNA-DNA hybrids. The protein is Ribonuclease HII of Pediococcus pentosaceus (strain ATCC 25745 / CCUG 21536 / LMG 10740 / 183-1w).